Here is a 998-residue protein sequence, read N- to C-terminus: Kinesin-like protein KIF19 (998 aa).

Residues 11-346 (QLMVALRVRP…LTYAGRAKNI (336 aa)) form the Kinesin motor domain. 104-111 (GPTGCGKT) is an ATP binding site. 2 coiled-coil regions span residues 360–391 (HIAQYTSIIADLRGEIQRLKRKIDEQTGRGQA) and 424–452 (EQLASAFQEQMDVRRRLLELENRAMEVQI). The span at 482 to 494 (ECYAKDDSEKDSD) shows a compositional bias: basic and acidic residues. A disordered region spans residues 482-503 (ECYAKDDSEKDSDTGDDQPDIL). Positions 507–552 (EVAAARESIAALVDEQKQLRKQKLALEQRCRELRARGRRLEETLPR) form a coiled coil. Composition is skewed to polar residues over residues 662–676 (SSLPKITPAGTSLTP), 684–697 (KTLSSDAQHLQNSA), 746–761 (SLGSWINSSPDSSENL), and 836–852 (TLQHAASEDNLSSSTGE). Disordered regions lie at residues 662–706 (SSLP…TESE), 746–765 (SLGSWINSSPDSSENLSEIP), 794–911 (GTEG…THLL), and 948–998 (KLPP…SRHN). Basic and acidic residues predominate over residues 989–998 (HGKDGCSRHN).

This sequence belongs to the TRAFAC class myosin-kinesin ATPase superfamily. Kinesin family.

It localises to the cytoplasm. Its subcellular location is the cytoskeleton. The protein localises to the cell projection. It is found in the cilium. Functionally, plus end-directed microtubule-dependent motor protein that regulates the length of motile cilia by mediating depolymerization of microtubules at ciliary tips. In Homo sapiens (Human), this protein is Kinesin-like protein KIF19 (KIF19).